A 417-amino-acid polypeptide reads, in one-letter code: Type IV inositol polyphosphate 5-phosphatase 9 (417 aa).

Catalytic stretches follow at residues 258–273 and 339–354; these read DRVI…ISLP and KKRA…WYGN.

This sequence belongs to the inositol polyphosphate 5-phosphatase family. In terms of tissue distribution, specifically expressed in roots.

The enzyme catalyses a 1,2-diacyl-sn-glycero-3-phospho-(1D-myo-inositol-4,5-bisphosphate) + H2O = a 1,2-diacyl-sn-glycero-3-phospho-(1D-myo-inositol 4-phosphate) + phosphate. The catalysed reaction is a 1,2-diacyl-sn-glycero-3-phospho-(1D-myo-inositol-3,4,5-trisphosphate) + H2O = a 1,2-diacyl-sn-glycero-3-phospho-(1D-myo-inositol-3,4-bisphosphate) + phosphate. In terms of biological role, has phosphatase activity toward PtdIns(4,5)P2 and at a lower extent toward PtdIns(3,4,5)P3 but not toward Ins(1,4,5)P3. Functions in salt stress response by regulating reactive oxygen species (ROS) production, endocytosis, Ca(2+) influx and stress-responsive genes expression. The chain is Type IV inositol polyphosphate 5-phosphatase 9 from Arabidopsis thaliana (Mouse-ear cress).